The following is a 72-amino-acid chain: MSPLAFVISLPIRFYRKFLGPLLPKVCRFHPSCSTYAMEALEKHGGLKGSWLTLWRLVRCQPFHPGGIDPVP.

Belongs to the UPF0161 family.

Its subcellular location is the cell inner membrane. Its function is as follows. Could be involved in insertion of integral membrane proteins into the membrane. This chain is Putative membrane protein insertion efficiency factor, found in Myxococcus xanthus (strain DK1622).